A 748-amino-acid polypeptide reads, in one-letter code: Subtilisin-like protease (748 aa).

A signal peptide spans 1–24 (MMKMELRLLVSLIFILCSISMLAA). Residues 37-115 (TYIVHVKKSE…ARPERTLELH (79 aa)) enclose the Inhibitor I9 domain. The region spanning 122–600 (FLGLKQGQGL…AGHVNPVKAN (479 aa)) is the Peptidase S8 domain. Active-site charge relay system residues include Asp-147 and His-206. In terms of domain architecture, PA spans 365-454 (PLVYPGSFGY…VEVSYAAGLT (90 aa)). N-linked (GlcNAc...) asparagine glycans are attached at residues Asn-376, Asn-380, and Asn-405. The active-site Charge relay system is Ser-533. 2 N-linked (GlcNAc...) asparagine glycosylation sites follow: Asn-675 and Asn-722.

It belongs to the peptidase S8 family.

The protein localises to the secreted. The protein resides in the extracellular space. It localises to the apoplast. Required for arbuscular mycorrhiza (AM) development during AM symbiosis with AM fungi (e.g. Glomeromycota intraradices). The sequence is that of Subtilisin-like protease from Medicago truncatula (Barrel medic).